Reading from the N-terminus, the 413-residue chain is MTDPTTEIDVDLDVQEILLAASQHDIPKLRQLIRSNQTIANPVNVKDPETGYAPLHAAIAACEPDDEEPNGVQTNGEQGDEQKSVEEKGSATVRFLLQEGAIWNDLDNNNETPGCVARRLGLTELYEQLVDAGVRAELLLNRLDGYEELEDDDEEEEEGQEEQTGTEEVEVEGESAPQLVEATTTTETAMETGPDVTNSRYLDSNLTFQNDRLLDQDQNGVMMAWETDIMAKSAKKLLPTSGLRVLNVGHGMGIVDGFIQEQSPAEHHIIEAHPEVVAEMKRKGWGEKPGVTIHEGRWQDILPDLVGQGVMFDAIYYDTFAESYGDFREFFSEQVIGLLEQEGKWSFFNGMGADRQISYDVYQKVAEMDLMDAGFDVEWEEIALPKLDNEWDGVRRAYWQIESYRLPLCKYMD.

2 disordered regions span residues 65 to 85 (DDEE…QKSV) and 148 to 178 (ELED…SAPQ). The span at 148–173 (ELEDDDEEEEEGQEEQTGTEEVEVEG) shows a compositional bias: acidic residues. The 222-residue stretch at 192–413 (TGPDVTNSRY…YRLPLCKYMD (222 aa)) folds into the RMT2 domain. Residues Tyr-201, Met-230, 250-255 (HGMGIV), 271-273 (EAH), 298-299 (WQ), and Asp-318 each bind S-adenosyl-L-methionine.

The protein belongs to the class I-like SAM-binding methyltransferase superfamily. RMT2 methyltransferase family. In terms of assembly, monomer.

The protein localises to the cytoplasm. The protein resides in the nucleus. Its function is as follows. S-adenosyl-L-methionine-dependent protein-arginine N-methyltransferase that methylates the delta-nitrogen atom of arginine residues to form N5-methylarginine (type IV) in target proteins. Monomethylates ribosomal protein L12. This Aspergillus oryzae (strain ATCC 42149 / RIB 40) (Yellow koji mold) protein is Protein arginine N-methyltransferase 2.